The sequence spans 200 residues: Putative 3-methyladenine DNA glycosylase (200 aa).

It belongs to the DNA glycosylase MPG family.

In Methanocella arvoryzae (strain DSM 22066 / NBRC 105507 / MRE50), this protein is Putative 3-methyladenine DNA glycosylase.